The primary structure comprises 163 residues: ATP synthase subunit b 1 (163 aa).

The helical transmembrane segment at 5–25 (FDATFFAFVGLVLFLALVVYL) threads the bilayer.

The protein belongs to the ATPase B chain family. As to quaternary structure, F-type ATPases have 2 components, F(1) - the catalytic core - and F(0) - the membrane proton channel. F(1) has five subunits: alpha(3), beta(3), gamma(1), delta(1), epsilon(1). F(0) has three main subunits: a(1), b(2) and c(10-14). The alpha and beta chains form an alternating ring which encloses part of the gamma chain. F(1) is attached to F(0) by a central stalk formed by the gamma and epsilon chains, while a peripheral stalk is formed by the delta and b chains.

Its subcellular location is the cell inner membrane. Functionally, f(1)F(0) ATP synthase produces ATP from ADP in the presence of a proton or sodium gradient. F-type ATPases consist of two structural domains, F(1) containing the extramembraneous catalytic core and F(0) containing the membrane proton channel, linked together by a central stalk and a peripheral stalk. During catalysis, ATP synthesis in the catalytic domain of F(1) is coupled via a rotary mechanism of the central stalk subunits to proton translocation. In terms of biological role, component of the F(0) channel, it forms part of the peripheral stalk, linking F(1) to F(0). This is ATP synthase subunit b 1 from Rhizobium leguminosarum bv. trifolii (strain WSM2304).